The primary structure comprises 151 residues: Class I hydrophobin A (151 aa).

The N-terminal stretch at 1 to 17 (MQFSVAAVLALATAVAA) is a signal peptide. Cystine bridges form between Cys52-Cys125, Cys60-Cys119, Cys61-Cys101, and Cys126-Cys144.

This sequence belongs to the fungal hydrophobin family. As to quaternary structure, interacts with cutinase cutL1 in a pH-dependent manner. Self-assembles to form functional amyloid fibrils called rodlets. Self-assembly into fibrillar rodlets occurs spontaneously at hydrophobic:hydrophilic interfaces and the rodlets further associate laterally to form amphipathic monolayers. rolA rodlet formation is regulated by the strength of ionic interactions between rolA molecules. Three types of self-assembled structures of rolA are observed: spherical, rod-like, and mesh-like.

It is found in the secreted. The protein localises to the cell wall. Aerial growth, conidiation, and dispersal of filamentous fungi in the environment rely upon a capability of their secreting small amphipathic proteins called hydrophobins (HPBs) with low sequence identity. Class I can self-assemble into an outermost layer of rodlet bundles on aerial cell surfaces, conferring cellular hydrophobicity that supports fungal growth, development and dispersal; whereas Class II form highly ordered films at water-air interfaces through intermolecular interactions but contribute nothing to the rodlet structure. RolA is a class I hydrophobin that undergoes a conformational change after its adsorption to hydrophobic surfaces such as the biodegradable polyester polybutylene succinate-coadipate (PBSA) and recruits the cutinase cutL1, resulting in condensation of cutL1 on the PBSA surface and consequent stimulation of PBSA hydrolysis. Increases also the activity of polyethylene terephthalate hydrolase (PETase) that hydrolyzes polyethylene terephthalate (PET), one of the most well-known polyesters that is widely used as packaging material, when the PET samples are preincubated with the hydrophobin. The wetting effect of rolA probably acts on PET surface to become hydrophilic, which leads PETase easier to contact and attack the surface. The protein is Class I hydrophobin A of Aspergillus oryzae (strain ATCC 42149 / RIB 40) (Yellow koji mold).